A 456-amino-acid chain; its full sequence is Vitamin K-dependent protein C (456 aa).

Positions Met-1–Ala-20 are cleaved as a signal peptide. A propeptide spanning residues Ala-21–Arg-42 is cleaved from the precursor. Positions Leu-47–Asp-88 constitute a Gla domain. 4-carboxyglutamate is present on residues Glu-48, Glu-49, Glu-56, Glu-58, Glu-61, Glu-62, Glu-67, Glu-68, and Glu-71. Residues Cys-59 and Cys-64 are joined by a disulfide bond. Disulfide bonds link Cys-92–Cys-111, Cys-101–Cys-106, Cys-105–Cys-120, and Cys-122–Cys-131. 2 consecutive EGF-like domains span residues Pro-97–Gln-132 and Ser-136–Gln-176. At Asp-113 the chain carries (3R)-3-hydroxyaspartate. Residue Asn-139 is glycosylated (N-linked (GlcNAc...) asparagine). 5 cysteine pairs are disulfide-bonded: Cys-140–Cys-151, Cys-147–Cys-160, Cys-162–Cys-175, Cys-183–Cys-318, and Cys-237–Cys-253. Residue Asn-202 is glycosylated (N-linked (GlcNAc...) asparagine). A Peptidase S1 domain is found at Leu-211–Arg-445. His-252 acts as the Charge relay system in catalysis. Asn-289 carries N-linked (GlcNAc...) asparagine glycosylation. Catalysis depends on Asp-298, which acts as the Charge relay system. Asn-350 carries an N-linked (GlcNAc...) asparagine glycan. 2 cysteine pairs are disulfide-bonded: Cys-368–Cys-382 and Cys-393–Cys-421. Ser-397 (charge relay system) is an active-site residue.

It belongs to the peptidase S1 family. As to quaternary structure, synthesized as a single chain precursor, which is cleaved into a light chain and a heavy chain held together by a disulfide bond. The enzyme is then activated by thrombin, which cleaves a tetradecapeptide from the amino end of the heavy chain; this reaction, which occurs at the surface of endothelial cells, is strongly promoted by thrombomodulin. In terms of processing, the vitamin K-dependent, enzymatic carboxylation of some Glu residues allows the modified protein to bind calcium. Post-translationally, the iron and 2-oxoglutarate dependent 3-hydroxylation of aspartate and asparagine is (R) stereospecific within EGF domains. Plasma; synthesized in the liver.

It localises to the secreted. The protein localises to the golgi apparatus. The protein resides in the endoplasmic reticulum. It carries out the reaction Degradation of blood coagulation factors Va and VIIIa.. Functionally, protein C is a vitamin K-dependent serine protease that regulates blood coagulation by inactivating factors Va and VIIIa in the presence of calcium ions and phospholipids. Exerts a protective effect on the endothelial cell barrier function. The protein is Vitamin K-dependent protein C (PROC) of Canis lupus familiaris (Dog).